A 148-amino-acid polypeptide reads, in one-letter code: Gag-Pol polyprotein (148 aa).

The 64-residue stretch at 1-64 (IPYNPQSQGV…SAGERIIDII (64 aa)) folds into the Integrase catalytic domain. Glutamate 12 provides a ligand contact to Mg(2+). A DNA-binding region (integrase-type) is located at residues 83 to 130 (FRVYYRDSRDPIWKGPAKLLWKGEGAVVIQDNSDIKVVPRRKVKIIRD).

As to quaternary structure, homotetramer; may further associate as a homohexadecamer. Part of the pre-integration complex (PIC) which is composed of viral genome, matrix protein, Vpr and integrase. Interacts with human SMARCB1/INI1 and human PSIP1/LEDGF isoform 1. Interacts with human KPNA3; this interaction might play a role in nuclear import of the pre-integration complex. Interacts with human NUP153; this interaction might play a role in nuclear import of the pre-integration complex. In terms of processing, specific enzymatic cleavages by the viral protease yield mature proteins.

Functionally, catalyzes viral DNA integration into the host chromosome, by performing a series of DNA cutting and joining reactions. This enzyme activity takes place after virion entry into a cell and reverse transcription of the RNA genome in dsDNA. The first step in the integration process is 3' processing. This step requires a complex comprising the viral genome, matrix protein, Vpr and integrase. This complex is called the pre-integration complex (PIC). The integrase protein removes 2 nucleotides from each 3' end of the viral DNA, leaving recessed CA OH's at the 3' ends. In the second step, the PIC enters cell nucleus. This process is mediated through integrase and Vpr proteins, and allows the virus to infect a non dividing cell. This ability to enter the nucleus is specific of lentiviruses, other retroviruses cannot and rely on cell division to access cell chromosomes. In the third step, termed strand transfer, the integrase protein joins the previously processed 3' ends to the 5' ends of strands of target cellular DNA at the site of integration. The 5'-ends are produced by integrase-catalyzed staggered cuts, 5 bp apart. A Y-shaped, gapped, recombination intermediate results, with the 5'-ends of the viral DNA strands and the 3' ends of target DNA strands remaining unjoined, flanking a gap of 5 bp. The last step is viral DNA integration into host chromosome. This involves host DNA repair synthesis in which the 5 bp gaps between the unjoined strands are filled in and then ligated. Since this process occurs at both cuts flanking the HIV genome, a 5 bp duplication of host DNA is produced at the ends of HIV-1 integration. Alternatively, Integrase may catalyze the excision of viral DNA just after strand transfer, this is termed disintegration. This is Gag-Pol polyprotein (gag-pol) from Homo sapiens (Human).